A 275-amino-acid polypeptide reads, in one-letter code: 3-methyl-2-oxobutanoate hydroxymethyltransferase (275 aa).

D49 and D88 together coordinate Mg(2+). 3-methyl-2-oxobutanoate contacts are provided by residues 49 to 50 (DS), D88, and K118. E120 is a Mg(2+) binding site. The active-site Proton acceptor is the E187.

This sequence belongs to the PanB family. As to quaternary structure, homodecamer; pentamer of dimers. It depends on Mg(2+) as a cofactor.

It localises to the cytoplasm. It catalyses the reaction 3-methyl-2-oxobutanoate + (6R)-5,10-methylene-5,6,7,8-tetrahydrofolate + H2O = 2-dehydropantoate + (6S)-5,6,7,8-tetrahydrofolate. Its pathway is cofactor biosynthesis; (R)-pantothenate biosynthesis; (R)-pantoate from 3-methyl-2-oxobutanoate: step 1/2. Its function is as follows. Catalyzes the reversible reaction in which hydroxymethyl group from 5,10-methylenetetrahydrofolate is transferred onto alpha-ketoisovalerate to form ketopantoate. The protein is 3-methyl-2-oxobutanoate hydroxymethyltransferase of Brucella melitensis biotype 1 (strain ATCC 23456 / CCUG 17765 / NCTC 10094 / 16M).